Here is a 505-residue protein sequence, read N- to C-terminus: Deoxyguanosinetriphosphate triphosphohydrolase (505 aa).

Residues 66–273 (RLTHSMEVQQ…MEAADDISYC (208 aa)) form the HD domain.

It belongs to the dGTPase family. Type 1 subfamily. In terms of assembly, homotetramer. It depends on Mg(2+) as a cofactor.

It catalyses the reaction dGTP + H2O = 2'-deoxyguanosine + triphosphate + H(+). DGTPase preferentially hydrolyzes dGTP over the other canonical NTPs. This Shigella flexneri protein is Deoxyguanosinetriphosphate triphosphohydrolase.